The following is a 441-amino-acid chain: Ribulose bisphosphate carboxylase large chain (441 aa).

Substrate is bound by residues Asn-89 and Thr-139. Catalysis depends on Lys-141, which acts as the Proton acceptor. Lys-143 lines the substrate pocket. Residues Lys-167, Asp-169, and Glu-170 each coordinate Mg(2+). Lys-167 is modified (N6-carboxylysine). His-260 (proton acceptor) is an active-site residue. Substrate is bound by residues Arg-261, His-293, and Ser-345.

The protein belongs to the RuBisCO large chain family. Type I subfamily. As to quaternary structure, heterohexadecamer of 8 large chains and 8 small chains; disulfide-linked. The disulfide link is formed within the large subunit homodimers. Mg(2+) serves as cofactor. The disulfide bond which can form in the large chain dimeric partners within the hexadecamer appears to be associated with oxidative stress and protein turnover.

Its subcellular location is the plastid. It is found in the chloroplast. It catalyses the reaction 2 (2R)-3-phosphoglycerate + 2 H(+) = D-ribulose 1,5-bisphosphate + CO2 + H2O. It carries out the reaction D-ribulose 1,5-bisphosphate + O2 = 2-phosphoglycolate + (2R)-3-phosphoglycerate + 2 H(+). RuBisCO catalyzes two reactions: the carboxylation of D-ribulose 1,5-bisphosphate, the primary event in carbon dioxide fixation, as well as the oxidative fragmentation of the pentose substrate in the photorespiration process. Both reactions occur simultaneously and in competition at the same active site. The protein is Ribulose bisphosphate carboxylase large chain of Coriandrum sativum (Coriander).